A 67-amino-acid polypeptide reads, in one-letter code: Theromin (67 aa).

The 26-residue stretch at 2–27 (CENTECPRACPGEYEFDEDGCNTCVC) folds into the Antistasin-like domain.

In terms of assembly, homodimer. In terms of processing, eight disulfide bonds are present.

It localises to the secreted. In terms of biological role, potent thrombin-specific inhibitor. The protein is Theromin of Theromyzon tessulatum (Duck leech).